The chain runs to 162 residues: NADPH-dependent 7-cyano-7-deazaguanine reductase (162 aa).

Cys-53 (thioimide intermediate) is an active-site residue. The active-site Proton donor is Asp-60. Substrate contacts are provided by residues 75 to 77 (VES) and 94 to 95 (HE).

This sequence belongs to the GTP cyclohydrolase I family. QueF type 1 subfamily.

The protein resides in the cytoplasm. The catalysed reaction is 7-aminomethyl-7-carbaguanine + 2 NADP(+) = 7-cyano-7-deazaguanine + 2 NADPH + 3 H(+). It functions in the pathway tRNA modification; tRNA-queuosine biosynthesis. Catalyzes the NADPH-dependent reduction of 7-cyano-7-deazaguanine (preQ0) to 7-aminomethyl-7-deazaguanine (preQ1). This is NADPH-dependent 7-cyano-7-deazaguanine reductase from Exiguobacterium sp. (strain ATCC BAA-1283 / AT1b).